The sequence spans 209 residues: Small ribosomal subunit protein uS5 (209 aa).

Residues 48-111 form the S5 DRBM domain; that stretch reads LEDEVLDINM…DAAKLNITYI (64 aa).

Belongs to the universal ribosomal protein uS5 family. Part of the 30S ribosomal subunit. Contacts protein S4.

Its function is as follows. With S4 and S12 plays an important role in translational accuracy. This chain is Small ribosomal subunit protein uS5, found in Methanosarcina acetivorans (strain ATCC 35395 / DSM 2834 / JCM 12185 / C2A).